A 418-amino-acid polypeptide reads, in one-letter code: Glutamyl-tRNA reductase (418 aa).

Substrate-binding positions include 49–52 (TCNR), Ser109, 114–116 (EPQ), and Gln120. Cys50 (nucleophile) is an active-site residue. 189–194 (GAGETI) is a binding site for NADP(+).

It belongs to the glutamyl-tRNA reductase family. In terms of assembly, homodimer.

The enzyme catalyses (S)-4-amino-5-oxopentanoate + tRNA(Glu) + NADP(+) = L-glutamyl-tRNA(Glu) + NADPH + H(+). The protein operates within porphyrin-containing compound metabolism; protoporphyrin-IX biosynthesis; 5-aminolevulinate from L-glutamyl-tRNA(Glu): step 1/2. Its function is as follows. Catalyzes the NADPH-dependent reduction of glutamyl-tRNA(Glu) to glutamate 1-semialdehyde (GSA). The sequence is that of Glutamyl-tRNA reductase from Escherichia coli O6:K15:H31 (strain 536 / UPEC).